Consider the following 732-residue polypeptide: Translation initiation factor IF-2 (732 aa).

A disordered region spans residues 40–147 (PEVVEKLDHT…QQEQPMKKEK (108 aa)). Residues 42–67 (VVEKLDHTYNKKNERPQASAPKEKQK) are compositionally biased toward basic and acidic residues. The span at 90 to 103 (KVPKKKSANKKKEG) shows a compositional bias: basic residues. A compositionally biased stretch (basic and acidic residues) spans 104 to 117 (KKHDLQLQQQEKKI). A compositionally biased stretch (basic residues) spans 118–129 (FHQQKKKIKGKA). The tr-type G domain occupies 233–402 (ERPPVVTIMG…LLVSEMEELK (170 aa)). Residues 242 to 249 (GHVDHGKT) form a G1 region. 242–249 (GHVDHGKT) contacts GTP. Residues 267-271 (GITQH) are G2. The segment at 288–291 (DTPG) is G3. Residues 288-292 (DTPGH) and 342-345 (NKMD) each bind GTP. The G4 stretch occupies residues 342 to 345 (NKMD). The interval 378–380 (SAK) is G5.

This sequence belongs to the TRAFAC class translation factor GTPase superfamily. Classic translation factor GTPase family. IF-2 subfamily.

It is found in the cytoplasm. One of the essential components for the initiation of protein synthesis. Protects formylmethionyl-tRNA from spontaneous hydrolysis and promotes its binding to the 30S ribosomal subunits. Also involved in the hydrolysis of GTP during the formation of the 70S ribosomal complex. The protein is Translation initiation factor IF-2 of Geobacillus sp. (strain WCH70).